A 158-amino-acid polypeptide reads, in one-letter code: Cyclic pyranopterin monophosphate synthase (158 aa).

Residues 76–78 (LCH) and 114–115 (ME) each bind substrate. D129 is an active-site residue.

Belongs to the MoaC family. In terms of assembly, homohexamer; trimer of dimers.

The enzyme catalyses (8S)-3',8-cyclo-7,8-dihydroguanosine 5'-triphosphate = cyclic pyranopterin phosphate + diphosphate. It functions in the pathway cofactor biosynthesis; molybdopterin biosynthesis. Catalyzes the conversion of (8S)-3',8-cyclo-7,8-dihydroguanosine 5'-triphosphate to cyclic pyranopterin monophosphate (cPMP). The chain is Cyclic pyranopterin monophosphate synthase from Brucella anthropi (strain ATCC 49188 / DSM 6882 / CCUG 24695 / JCM 21032 / LMG 3331 / NBRC 15819 / NCTC 12168 / Alc 37) (Ochrobactrum anthropi).